Consider the following 576-residue polypeptide: DNA mismatch repair protein MutL (576 aa).

The protein belongs to the DNA mismatch repair MutL/HexB family.

In terms of biological role, this protein is involved in the repair of mismatches in DNA. It is required for dam-dependent methyl-directed DNA mismatch repair. May act as a 'molecular matchmaker', a protein that promotes the formation of a stable complex between two or more DNA-binding proteins in an ATP-dependent manner without itself being part of a final effector complex. In Chlamydia trachomatis serovar L2 (strain ATCC VR-902B / DSM 19102 / 434/Bu), this protein is DNA mismatch repair protein MutL.